The following is a 398-amino-acid chain: Bifunctional enzyme IspD/IspF (398 aa).

A 2-C-methyl-D-erythritol 4-phosphate cytidylyltransferase region spans residues 1–234; the sequence is MTNSPRTAAI…SRLMAALGDI (234 aa). Residues 235-398 are 2-C-methyl-D-erythritol 2,4-cyclodiphosphate synthase; that stretch reads RTGTGYDVHA…LPWGADGLAG (164 aa). Asp-241 and His-243 together coordinate a divalent metal cation. Residues 241 to 243 and 267 to 268 each bind 4-CDP-2-C-methyl-D-erythritol 2-phosphate; these read DVH and HS. His-275 serves as a coordination point for a divalent metal cation. 4-CDP-2-C-methyl-D-erythritol 2-phosphate contacts are provided by residues 289–291, 365–368, Phe-372, and Arg-375; these read DIG and TTSE.

The protein in the N-terminal section; belongs to the IspD/TarI cytidylyltransferase family. IspD subfamily. This sequence in the C-terminal section; belongs to the IspF family. It depends on a divalent metal cation as a cofactor.

The catalysed reaction is 2-C-methyl-D-erythritol 4-phosphate + CTP + H(+) = 4-CDP-2-C-methyl-D-erythritol + diphosphate. The enzyme catalyses 4-CDP-2-C-methyl-D-erythritol 2-phosphate = 2-C-methyl-D-erythritol 2,4-cyclic diphosphate + CMP. It functions in the pathway isoprenoid biosynthesis; isopentenyl diphosphate biosynthesis via DXP pathway; isopentenyl diphosphate from 1-deoxy-D-xylulose 5-phosphate: step 2/6. The protein operates within isoprenoid biosynthesis; isopentenyl diphosphate biosynthesis via DXP pathway; isopentenyl diphosphate from 1-deoxy-D-xylulose 5-phosphate: step 4/6. Functionally, bifunctional enzyme that catalyzes the formation of 4-diphosphocytidyl-2-C-methyl-D-erythritol from CTP and 2-C-methyl-D-erythritol 4-phosphate (MEP) (IspD), and catalyzes the conversion of 4-diphosphocytidyl-2-C-methyl-D-erythritol 2-phosphate (CDP-ME2P) to 2-C-methyl-D-erythritol 2,4-cyclodiphosphate (ME-CPP) with a corresponding release of cytidine 5-monophosphate (CMP) (IspF). The protein is Bifunctional enzyme IspD/IspF of Rhodopseudomonas palustris (strain TIE-1).